The sequence spans 509 residues: 2-isopropylmalate synthase (509 aa).

The Pyruvate carboxyltransferase domain occupies isoleucine 5–lysine 267. Residues aspartate 14, histidine 202, histidine 204, and asparagine 238 each contribute to the Mn(2+) site. The segment at lysine 391 to asparagine 509 is regulatory domain.

This sequence belongs to the alpha-IPM synthase/homocitrate synthase family. LeuA type 1 subfamily. Homodimer. Mn(2+) is required as a cofactor.

The protein localises to the cytoplasm. It carries out the reaction 3-methyl-2-oxobutanoate + acetyl-CoA + H2O = (2S)-2-isopropylmalate + CoA + H(+). It functions in the pathway amino-acid biosynthesis; L-leucine biosynthesis; L-leucine from 3-methyl-2-oxobutanoate: step 1/4. Functionally, catalyzes the condensation of the acetyl group of acetyl-CoA with 3-methyl-2-oxobutanoate (2-ketoisovalerate) to form 3-carboxy-3-hydroxy-4-methylpentanoate (2-isopropylmalate). This is 2-isopropylmalate synthase from Staphylococcus aureus (strain bovine RF122 / ET3-1).